The sequence spans 67 residues: Conotoxin Cl6.8 (67 aa).

A signal peptide spans 1-22 (MKVTAVLMVAVLVLTACQLTTA). Residues 23–39 (NTTDYVRRILARKSTMS) constitute a propeptide that is removed on maturation. 3 cysteine pairs are disulfide-bonded: Cys-43-Cys-58, Cys-50-Cys-62, and Cys-57-Cys-66. A Cysteine amide modification is found at Cys-66.

The protein belongs to the conotoxin O1 superfamily. In terms of tissue distribution, expressed by the venom duct.

It is found in the secreted. In Californiconus californicus (California cone), this protein is Conotoxin Cl6.8.